We begin with the raw amino-acid sequence, 207 residues long: Holliday junction resolvase RecU (207 aa).

A disordered region spans residues 1–21 (MTIRYPNGQVYRQPGPTKSKS). 4 residues coordinate Mg(2+): Thr-87, Asp-89, Glu-102, and Gln-121.

This sequence belongs to the RecU family. Mg(2+) is required as a cofactor.

The protein localises to the cytoplasm. The catalysed reaction is Endonucleolytic cleavage at a junction such as a reciprocal single-stranded crossover between two homologous DNA duplexes (Holliday junction).. Its function is as follows. Endonuclease that resolves Holliday junction intermediates in genetic recombination. Cleaves mobile four-strand junctions by introducing symmetrical nicks in paired strands. Promotes annealing of linear ssDNA with homologous dsDNA. Required for DNA repair, homologous recombination and chromosome segregation. The chain is Holliday junction resolvase RecU from Lactiplantibacillus plantarum (strain ATCC BAA-793 / NCIMB 8826 / WCFS1) (Lactobacillus plantarum).